A 253-amino-acid polypeptide reads, in one-letter code: MSSQTPGSEPRMEIWPAIDLRHGKPVRLRQGDYDQQTTFGDDPVEFAKRWQESGAKRLHLVDLDAARGDSPDANRDAVQRIIEATGLPCQMGGGVRDEITIESLLNVGVTRLVVGSRALKDPDWFVEMCDKYPGKLVAGIDARDGKVATQGWLETSDVSAFEFATKLRSRTENIAAIVYTDIAKDGMMQGPNFEGLAEMAAASDIPLVASGGVTTYDDIKQLVEMKMPAAIVGRSLYDGVMELGEVVRLAGDV.

Asp-19 functions as the Proton acceptor in the catalytic mechanism. The active-site Proton donor is the Asp-141.

It belongs to the HisA/HisF family.

The protein localises to the cytoplasm. It catalyses the reaction 1-(5-phospho-beta-D-ribosyl)-5-[(5-phospho-beta-D-ribosylamino)methylideneamino]imidazole-4-carboxamide = 5-[(5-phospho-1-deoxy-D-ribulos-1-ylimino)methylamino]-1-(5-phospho-beta-D-ribosyl)imidazole-4-carboxamide. Its pathway is amino-acid biosynthesis; L-histidine biosynthesis; L-histidine from 5-phospho-alpha-D-ribose 1-diphosphate: step 4/9. The chain is 1-(5-phosphoribosyl)-5-[(5-phosphoribosylamino)methylideneamino] imidazole-4-carboxamide isomerase from Rhodopirellula baltica (strain DSM 10527 / NCIMB 13988 / SH1).